Here is a 340-residue protein sequence, read N- to C-terminus: Phosphoribosylformylglycinamidine cyclo-ligase (340 aa).

It belongs to the AIR synthase family.

Its subcellular location is the cytoplasm. It catalyses the reaction 2-formamido-N(1)-(5-O-phospho-beta-D-ribosyl)acetamidine + ATP = 5-amino-1-(5-phospho-beta-D-ribosyl)imidazole + ADP + phosphate + H(+). The protein operates within purine metabolism; IMP biosynthesis via de novo pathway; 5-amino-1-(5-phospho-D-ribosyl)imidazole from N(2)-formyl-N(1)-(5-phospho-D-ribosyl)glycinamide: step 2/2. This Streptococcus mutans serotype c (strain ATCC 700610 / UA159) protein is Phosphoribosylformylglycinamidine cyclo-ligase.